The chain runs to 329 residues: Malate dehydrogenase (329 aa).

Residue Gly12–Gly18 coordinates NAD(+). The substrate site is built by Arg95 and Arg101. NAD(+)-binding positions include Asn108, Gln115, and Val132 to Asn134. Residues Asn134 and Arg165 each coordinate substrate. His190 functions as the Proton acceptor in the catalytic mechanism.

It belongs to the LDH/MDH superfamily. MDH type 2 family.

It carries out the reaction (S)-malate + NAD(+) = oxaloacetate + NADH + H(+). Its function is as follows. Catalyzes the reversible oxidation of malate to oxaloacetate. This is Malate dehydrogenase from Polynucleobacter necessarius subsp. necessarius (strain STIR1).